The chain runs to 371 residues: O-phospho-L-seryl-tRNA:Cys-tRNA synthase 1 (371 aa).

Pyridoxal 5'-phosphate is bound by residues 78–79 (AR), Asn183, and 206–208 (SGH). Lys209 carries the N6-(pyridoxal phosphate)lysine modification.

This sequence belongs to the SepCysS family. Homodimer. Probably interacts with SepRS. The cofactor is pyridoxal 5'-phosphate.

The catalysed reaction is O-phospho-L-seryl-tRNA(Cys) + hydrogen sulfide + H(+) = L-cysteinyl-tRNA(Cys) + phosphate. Its function is as follows. Converts O-phospho-L-seryl-tRNA(Cys) (Sep-tRNA(Cys)) to L-cysteinyl-tRNA(Cys) (Cys-tRNA(Cys)). This Archaeoglobus fulgidus (strain ATCC 49558 / DSM 4304 / JCM 9628 / NBRC 100126 / VC-16) protein is O-phospho-L-seryl-tRNA:Cys-tRNA synthase 1.